A 389-amino-acid polypeptide reads, in one-letter code: Indole-3-acetate monooxygenase (389 aa).

Belongs to the HpaH/HsaA monooxygenase family.

It catalyses the reaction (indol-3-yl)acetate + NADH + O2 + H(+) = 2-hydroxy-(1H-indol-3-yl)acetate + NAD(+) + H2O. It carries out the reaction indole + NADH + O2 + H(+) = indoxyl + NAD(+) + H2O. In terms of biological role, involved in the degradation of the plant hormone indole-3-acetic acid (IAA). Catalyzes the first step of the pathway, the conversion of IAA to 2-hydroxy-IAA (2-OH-IAA). Can also convert indole to indoxyl, which spontaneously dimerizes in the presence of oxygen to form the blue pigment indigo. In Pseudomonas putida (Arthrobacter siderocapsulatus), this protein is Indole-3-acetate monooxygenase.